Here is a 1012-residue protein sequence, read N- to C-terminus: Translation initiation factor IF-2, chloroplastic (1012 aa).

A compositionally biased stretch (low complexity) spans Gly-75–Leu-102. 3 disordered regions span residues Gly-75–Arg-132, Glu-147–Lys-294, and Ala-319–Gly-340. Over residues Ser-152–Pro-175 the composition is skewed to polar residues. Residues Ser-183–Ser-194 are compositionally biased toward low complexity. Residues Val-208–Glu-231 show a composition bias toward basic and acidic residues. Residues Pro-240 to Pro-257 are compositionally biased toward pro residues. A compositionally biased stretch (basic and acidic residues) spans Val-277–Lys-294. The tr-type G domain occupies Asp-488–Lys-661. The G1 stretch occupies residues Gly-497–Thr-504. Gly-497–Thr-504 is a binding site for GTP. The interval Gly-522 to Gly-526 is G2. Positions Asp-547–Gly-550 are G3. GTP is bound by residues Asp-547–His-551 and Asn-601–Asp-604. Residues Asn-601–Asp-604 are G4. Residues Ser-637–Leu-639 are G5.

The protein belongs to the TRAFAC class translation factor GTPase superfamily. Classic translation factor GTPase family. IF-2 subfamily.

It localises to the plastid. It is found in the chloroplast. One of the essential components for the initiation of protein synthesis. Protects formylmethionyl-tRNA from spontaneous hydrolysis and promotes its binding to the 30S ribosomal subunits. Also involved in the hydrolysis of GTP during the formation of the 70S ribosomal complex. The protein is Translation initiation factor IF-2, chloroplastic (IF2CP) of Phaseolus vulgaris (Kidney bean).